The sequence spans 332 residues: Lipoyl synthase (332 aa).

Residues C55, C60, C66, C81, C85, C88, and S292 each contribute to the [4Fe-4S] cluster site. Positions 67-281 (WEDREATFLI…SDEAERIGFL (215 aa)) constitute a Radical SAM core domain.

This sequence belongs to the radical SAM superfamily. Lipoyl synthase family. It depends on [4Fe-4S] cluster as a cofactor.

Its subcellular location is the cytoplasm. It carries out the reaction [[Fe-S] cluster scaffold protein carrying a second [4Fe-4S](2+) cluster] + N(6)-octanoyl-L-lysyl-[protein] + 2 oxidized [2Fe-2S]-[ferredoxin] + 2 S-adenosyl-L-methionine + 4 H(+) = [[Fe-S] cluster scaffold protein] + N(6)-[(R)-dihydrolipoyl]-L-lysyl-[protein] + 4 Fe(3+) + 2 hydrogen sulfide + 2 5'-deoxyadenosine + 2 L-methionine + 2 reduced [2Fe-2S]-[ferredoxin]. It participates in protein modification; protein lipoylation via endogenous pathway; protein N(6)-(lipoyl)lysine from octanoyl-[acyl-carrier-protein]: step 2/2. Functionally, catalyzes the radical-mediated insertion of two sulfur atoms into the C-6 and C-8 positions of the octanoyl moiety bound to the lipoyl domains of lipoate-dependent enzymes, thereby converting the octanoylated domains into lipoylated derivatives. The polypeptide is Lipoyl synthase (Beutenbergia cavernae (strain ATCC BAA-8 / DSM 12333 / CCUG 43141 / JCM 11478 / NBRC 16432 / NCIMB 13614 / HKI 0122)).